A 98-amino-acid polypeptide reads, in one-letter code: Feather keratin (98 aa).

N-acetylalanine is present on A1.

This sequence belongs to the avian keratin family. The avian keratins (F-ker, S-ker, C-ker and B-ker) are a complex mixture of very similar polypeptides.

The chain is Feather keratin from Chroicocephalus novaehollandiae (Silver gull).